The chain runs to 357 residues: G-protein coupled receptor 183 (357 aa).

The Extracellular portion of the chain corresponds to 1-27; it reads MANNFTTPLATSHGNNCDLYAHHSTAR. The N-linked (GlcNAc...) asparagine glycan is linked to asparagine 4. The chain crosses the membrane as a helical span at residues 28-53; sequence VLMPLHYSLVFIIGLVGNLLALVVIV. Residues 54–73 are Cytoplasmic-facing; the sequence is QNRKKINSTTLYSMNLVISD. Residues 74–91 traverse the membrane as a helical segment; sequence ILFTTALPTRIAYYALGF. Arginine 83 is a 7alpha,25-dihydroxycholesterol binding site. Over 92-101 the chain is Extracellular; the sequence is DWRIGDALCR. A disulfide bond links cysteine 100 and cysteine 177. A helical membrane pass occupies residues 102-123; it reads VTALVFYINTYAGVNFMTCLSI. 7alpha,25-dihydroxycholesterol-binding residues include tyrosine 108 and tyrosine 112. The segment at 122–130 is interaction with G proteins; the sequence is SIDRFFAVV. The Cytoplasmic portion of the chain corresponds to 124–145; that stretch reads DRFFAVVHPLRYNKIKRIEYAK. The helical transmembrane segment at 146–164 threads the bilayer; sequence GVCLSVWILVFAQTLPLLL. Over 165 to 188 the chain is Extracellular; the sequence is TPMSKEEGDKTTCMEYPNFEGTAS. Residues 189–211 form a helical membrane-spanning segment; that stretch reads LPWILLGACLLGYVLPITVILLC. The Cytoplasmic portion of the chain corresponds to 212–237; sequence YSQICCKLFRTAKQNPLTEKSGVNKK. Residues 238-261 traverse the membrane as a helical segment; the sequence is ALNTIILIIVVFILCFTPYHVAII. Tyrosine 256 serves as a coordination point for 7alpha,25-dihydroxycholesterol. Residues 262–283 lie on the Extracellular side of the membrane; the sequence is QHMIKMLCSPGALECGARHSFQ. Residues 284 to 308 traverse the membrane as a helical segment; the sequence is ISLHFTVCLMNFNCCMDPFIYFFAC. Residues 309 to 357 are Cytoplasmic-facing; it reads KGYKRKVMKMLKRQVSVSISSAVRSAPEENSREMTESQMMIHSKASNGR. Serine 324 and serine 345 each carry phosphoserine. The segment at 336 to 357 is disordered; it reads EENSREMTESQMMIHSKASNGR. The span at 344–357 shows a compositional bias: polar residues; it reads ESQMMIHSKASNGR.

This sequence belongs to the G-protein coupled receptor 1 family. As to quaternary structure, homodimer and heterodimer. Heterodimerizes with CXCR5; leading to modulate the interaction between of CXCL13 and CXCR5. Expressed in mature B-cells and increases in expression early after activation, before being down-regulated in germinal center B-cells. Expressed in astrocytes. Specifically expressed in CD4(+) dendritic cells but not in CD8(+) dendritic cells. Expressed in monocyte/osteoclasts precursors and mature osteoclasts.

It is found in the cell membrane. Its function is as follows. G-protein coupled receptor expressed in lymphocytes that acts as a chemotactic receptor for B-cells, T-cells, splenic dendritic cells, monocytes/macrophages and astrocytes. Receptor for oxysterol 7-alpha,25-dihydroxycholesterol (7-alpha,25-OHC) and other related oxysterols. Mediates cell positioning and movement of a number of cells by binding the 7-alpha,25-OHC ligand that forms a chemotactic gradient. Binding of 7-alpha,25-OHC mediates the correct localization of B-cells during humoral immune responses. Collaborates with CXCR5 to mediate B-cell migration; probably by forming a heterodimer with CXCR5 that affects the interaction between of CXCL13 and CXCR5. Guides B-cell movement along the B-cell zone-T-cell zone boundary and later to interfollicular and outer follicular regions. Its specific expression during B-cell maturation helps position B-cells appropriately for mounting T-dependent antibody responses. Also acts as a chemotactic receptor for some T-cells upon binding to 7-alpha,25-OHC ligand. Promotes follicular helper T (Tfh) cells differentiation by positioning activated T-cells at the follicle-T-zone interface, promoting contact of newly activated CD4 T-cells with activated dendritic cells and exposing them to Tfh-cell-promoting inducible costimulator (ICOS) ligand. Expression in splenic dendritic cells is required for their homeostasis, localization and ability to induce B- and T-cell responses: GPR183 acts as a chemotactic receptor in dendritic cells that mediates the accumulation of CD4(+) dendritic cells in bridging channels. Regulates migration of astrocytes and is involved in communication between astrocytes and macrophages. Promotes osteoclast precursor migration to bone surfaces. Signals constitutively through G(i)-alpha, but not G(s)-alpha or G(q)-alpha. Signals constitutively also via MAPK1/3 (ERK1/2). The polypeptide is G-protein coupled receptor 183 (Mus musculus (Mouse)).